The chain runs to 90 residues: Bombyxin B-3 (90 aa).

The N-terminal stretch at 1 to 20 (MMKTTIMFMLVVVISLTYSS) is a signal peptide. Disulfide bonds link Cys-30-Cys-76, Cys-42-Cys-89, and Cys-75-Cys-80. The propeptide at 49-67 (SGAQYAPYFWTRQYLGSRG) is c peptide like.

The protein belongs to the insulin family. As to quaternary structure, heterodimer of a B chain and an A chain linked by two disulfide bonds.

The protein localises to the secreted. Brain peptide responsible for activation of prothoracic glands to produce ecdysone in insects. The sequence is that of Bombyxin B-3 (BBXB3) from Bombyx mori (Silk moth).